Consider the following 138-residue polypeptide: Small ribosomal subunit protein uS11c (138 aa).

Residues 1–22 (MAKAIPKISSRRNGRIGSRKGA) form a disordered region. A compositionally biased stretch (basic residues) spans 9–22 (SSRRNGRIGSRKGA).

The protein belongs to the universal ribosomal protein uS11 family. Part of the 30S ribosomal subunit.

The protein localises to the plastid. It localises to the chloroplast. The chain is Small ribosomal subunit protein uS11c from Nicotiana tabacum (Common tobacco).